A 1341-amino-acid chain; its full sequence is Restriction of telomere capping protein 1 (1341 aa).

The disordered stretch occupies residues 1–39 (MSLSPHVENASIPKGSTPIPKNRNVSSIGKGEFLGSSSS). WD repeat units follow at residues 207 to 248 (NKFS…SIDN), 256 to 296 (EHTR…SKSS), 305 to 342 (TASD…YKFA), 367 to 406 (AHTG…NAAE), 439 to 486 (NTGY…IPKH), and 489 to 527 (LSET…TVLE). Disordered stretches follow at residues 559–593 (PELQ…IGGI), 600–619 (TGLT…GPTF), 630–651 (ASSF…ENRE), 736–765 (KNAT…DDDD), and 789–830 (NEKV…DRAR). Residues 630 to 644 (ASSFNSSSASLTSLT) show a composition bias toward low complexity. Residues 753–765 (DDGDDDDDDDDDD) are compositionally biased toward acidic residues. Residues 814–823 (SSISSISASR) show a composition bias toward low complexity. The WD 7 repeat unit spans residues 843–883 (KIQTLVDLISIATHNASVYLSIDDLTNFKIWILIRDSLLWD). Disordered regions lie at residues 941 to 962 (AFRA…KLKE) and 1013 to 1043 (DEHE…KSIP). Basic and acidic residues-rich tracts occupy residues 951–962 (DAEKKPVSKLKE) and 1015–1027 (HEHQ…HDSP). Ser-1036, Ser-1080, Ser-1087, Ser-1089, Ser-1123, and Ser-1133 each carry phosphoserine. 2 WD repeats span residues 1129–1169 (SRPD…KQLY) and 1216–1255 (LFGI…LITN). The RING-type; degenerate zinc finger occupies 1293 to 1335 (CVLCERPLKKLTMVILPCGHEGHFQCIQEWFLDENEQECPGGC).

Belongs to the WD repeat RTC1 family. As to quaternary structure, component of the SEA complex composed of at least IML1/SEA1, RTC1/SEA2, MTC5/SEA3, NPR2, NPR3, SEA4, SEC13 and SEH1. Interacts with ribosomes.

The protein localises to the vacuole membrane. In terms of biological role, component of the SEA complex which coats the vacuolar membrane and is involved in intracellular trafficking, autophagy, response to nitrogen starvation, and amino acid biogenesis. May be involved in a process influencing telomere capping. In Saccharomyces cerevisiae (strain ATCC 204508 / S288c) (Baker's yeast), this protein is Restriction of telomere capping protein 1 (RTC1).